Here is a 286-residue protein sequence, read N- to C-terminus: Formamidopyrimidine-DNA glycosylase (286 aa).

Pro-2 acts as the Schiff-base intermediate with DNA in catalysis. The active-site Proton donor is the Glu-3. The active-site Proton donor; for beta-elimination activity is the Lys-61. DNA contacts are provided by His-103, Arg-122, and Arg-164. The segment at 250-284 (NAYAQTGEPCGRCGTLIIRESFMNRGSHYCPNCQK) adopts an FPG-type zinc-finger fold. The active-site Proton donor; for delta-elimination activity is the Arg-274.

This sequence belongs to the FPG family. In terms of assembly, monomer. The cofactor is Zn(2+).

The catalysed reaction is Hydrolysis of DNA containing ring-opened 7-methylguanine residues, releasing 2,6-diamino-4-hydroxy-5-(N-methyl)formamidopyrimidine.. It carries out the reaction 2'-deoxyribonucleotide-(2'-deoxyribose 5'-phosphate)-2'-deoxyribonucleotide-DNA = a 3'-end 2'-deoxyribonucleotide-(2,3-dehydro-2,3-deoxyribose 5'-phosphate)-DNA + a 5'-end 5'-phospho-2'-deoxyribonucleoside-DNA + H(+). Involved in base excision repair of DNA damaged by oxidation or by mutagenic agents. Acts as a DNA glycosylase that recognizes and removes damaged bases. Has a preference for oxidized purines, such as 7,8-dihydro-8-oxoguanine (8-oxoG). Has AP (apurinic/apyrimidinic) lyase activity and introduces nicks in the DNA strand. Cleaves the DNA backbone by beta-delta elimination to generate a single-strand break at the site of the removed base with both 3'- and 5'-phosphates. This chain is Formamidopyrimidine-DNA glycosylase, found in Corynebacterium glutamicum (strain ATCC 13032 / DSM 20300 / JCM 1318 / BCRC 11384 / CCUG 27702 / LMG 3730 / NBRC 12168 / NCIMB 10025 / NRRL B-2784 / 534).